The chain runs to 364 residues: Mitogen-activated protein kinase 11 (364 aa).

The Protein kinase domain maps to 24–308 (LQGLRPVGSG…AAEALAHAYF (285 aa)). ATP-binding positions include 30–38 (VGSGAYGSV) and lysine 53. Glutamate 71 serves as a coordination point for nilotinib. The active-site Proton acceptor is aspartate 168. A Phosphothreonine; by MAP2K3, MAP2K4 and MAP2K6 modification is found at threonine 180. A TXY motif is present at residues 180-182 (TGY). At tyrosine 182 the chain carries Phosphotyrosine; by MAP2K3, MAP2K4 and MAP2K6. Residues 312–331 (HDPDDEPEAEPYDESVEAKE) form a disordered region. A compositionally biased stretch (acidic residues) spans 314–326 (PDDEPEAEPYDES). Position 323 is a phosphotyrosine; by ZAP70 (tyrosine 323).

Belongs to the protein kinase superfamily. CMGC Ser/Thr protein kinase family. MAP kinase subfamily. As to quaternary structure, interacts with HDAC3 and DUSP16. Mg(2+) is required as a cofactor. In terms of processing, dually phosphorylated on Thr-180 and Tyr-182 by MAP2K3/MKK3, MAP2K4/MKK4 and MAP2K6/MKK6, which activates the enzyme.

It is found in the cytoplasm. It localises to the nucleus. The enzyme catalyses L-seryl-[protein] + ATP = O-phospho-L-seryl-[protein] + ADP + H(+). The catalysed reaction is L-threonyl-[protein] + ATP = O-phospho-L-threonyl-[protein] + ADP + H(+). With respect to regulation, activated by phosphorylation on threonine and tyrosine by MAP2K3/MKK3, MAP2K4/MKK4 and MAP2K6/MKK6. MAP2K3/MKK3 and MAP2K6/MKK6 are both essential for the activation of MAPK11 induced by environmental stress. HDAC3 interacts directly and selectively with MAPK11 to repress ATF2 transcriptional activity, and regulate TNF gene expression in LPS-stimulated cells. Inhibited by SB203580 and pyridinyl-imidazole related compounds. Functionally, serine/threonine kinase which acts as an essential component of the MAP kinase signal transduction pathway. MAPK11 is one of the four p38 MAPKs which play an important role in the cascades of cellular responses evoked by extracellular stimuli such as pro-inflammatory cytokines or physical stress leading to direct activation of transcription factors. Accordingly, p38 MAPKs phosphorylate a broad range of proteins and it has been estimated that they may have approximately 200 to 300 substrates each. MAPK11 functions are mostly redundant with those of MAPK14. Some of the targets are downstream kinases which are activated through phosphorylation and further phosphorylate additional targets. RPS6KA5/MSK1 and RPS6KA4/MSK2 can directly phosphorylate and activate transcription factors such as CREB1, ATF1, the NF-kappa-B isoform RELA/NFKB3, STAT1 and STAT3, but can also phosphorylate histone H3 and the nucleosomal protein HMGN1. RPS6KA5/MSK1 and RPS6KA4/MSK2 play important roles in the rapid induction of immediate-early genes in response to stress or mitogenic stimuli, either by inducing chromatin remodeling or by recruiting the transcription machinery. On the other hand, two other kinase targets, MAPKAPK2/MK2 and MAPKAPK3/MK3, participate in the control of gene expression mostly at the post-transcriptional level, by phosphorylating ZFP36 (tristetraprolin) and ELAVL1, and by regulating EEF2K, which is important for the elongation of mRNA during translation. MKNK1/MNK1 and MKNK2/MNK2, two other kinases activated by p38 MAPKs, regulate protein synthesis by phosphorylating the initiation factor EIF4E2. In the cytoplasm, the p38 MAPK pathway is an important regulator of protein turnover. For example, CFLAR is an inhibitor of TNF-induced apoptosis whose proteasome-mediated degradation is regulated by p38 MAPK phosphorylation. Ectodomain shedding of transmembrane proteins is regulated by p38 MAPKs as well. In response to inflammatory stimuli, p38 MAPKs phosphorylate the membrane-associated metalloprotease ADAM17. Such phosphorylation is required for ADAM17-mediated ectodomain shedding of TGF-alpha family ligands, which results in the activation of EGFR signaling and cell proliferation. Additional examples of p38 MAPK substrates are the FGFR1. FGFR1 can be translocated from the extracellular space into the cytosol and nucleus of target cells, and regulates processes such as rRNA synthesis and cell growth. FGFR1 translocation requires p38 MAPK activation. In the nucleus, many transcription factors are phosphorylated and activated by p38 MAPKs in response to different stimuli. Classical examples include ATF1, ATF2, ATF6, ELK1, PTPRH, DDIT3, TP53/p53 and MEF2C and MEF2A. The p38 MAPKs are emerging as important modulators of gene expression by regulating chromatin modifiers and remodelers. The promoters of several genes involved in the inflammatory response, such as IL6, IL8 and IL12B, display a p38 MAPK-dependent enrichment of histone H3 phosphorylation on 'Ser-10' (H3S10ph) in LPS-stimulated myeloid cells. This phosphorylation enhances the accessibility of the cryptic NF-kappa-B-binding sites marking promoters for increased NF-kappa-B recruitment. Phosphorylates methyltransferase DOT1L on 'Ser-834', 'Thr-900', 'Ser-902', 'Thr-984', 'Ser-1001', 'Ser-1009' and 'Ser-1104'. This chain is Mitogen-activated protein kinase 11 (Mapk11), found in Mus musculus (Mouse).